Here is a 99-residue protein sequence, read N- to C-terminus: Signal recognition particle 19 kDa protein (99 aa).

It belongs to the SRP19 family. As to quaternary structure, part of the signal recognition particle protein translocation system, which is composed of SRP and FtsY. Archaeal SRP consists of a 7S RNA molecule of 300 nucleotides and two protein subunits: SRP54 and SRP19.

Its subcellular location is the cytoplasm. Involved in targeting and insertion of nascent membrane proteins into the cytoplasmic membrane. Binds directly to 7S RNA and mediates binding of the 54 kDa subunit of the SRP. The polypeptide is Signal recognition particle 19 kDa protein (Pyrococcus horikoshii (strain ATCC 700860 / DSM 12428 / JCM 9974 / NBRC 100139 / OT-3)).